A 349-amino-acid chain; its full sequence is MSKNKLSKGQERRVQANHQRRLKRTDNKPELDDSQLGEPQDGIVISRFGMHADVEAADGTQHRCNIRRTLRSLVTGDRVVWRPGVGTHAGVKGIVEAVHERTSVLNRPDIYDGVKPIAANIDQIVIVSAILPELSLNMIDRYLVACETLEVEPLIVLNKIDLLDAEARKTVDGMMDIYRHIGYRVLEVSSQTREGMEAFEQALADRISIFAGQSGVGKSSLLNALLPPSDKQILVNQVSDVSGLGQHTTTAARLYHFQHGGDVIDSPGVREFGLWHLEPEQVTQAYVEFRDYLGGCKFRDCRHDTDPGCAIRGAMEKGDIAKERFENYHRILESMASVKVRKNFTDAAG.

A disordered region spans residues 1 to 38 (MSKNKLSKGQERRVQANHQRRLKRTDNKPELDDSQLGE). In terms of domain architecture, CP-type G spans 102–272 (TSVLNRPDIY…VIDSPGVREF (171 aa)). Residues 158–161 (NKID) and 212–220 (GQSGVGKSS) contribute to the GTP site. The Zn(2+) site is built by C296, C301, H303, and C309.

This sequence belongs to the TRAFAC class YlqF/YawG GTPase family. RsgA subfamily. In terms of assembly, monomer. Associates with 30S ribosomal subunit, binds 16S rRNA. The cofactor is Zn(2+).

The protein resides in the cytoplasm. One of several proteins that assist in the late maturation steps of the functional core of the 30S ribosomal subunit. Helps release RbfA from mature subunits. May play a role in the assembly of ribosomal proteins into the subunit. Circularly permuted GTPase that catalyzes slow GTP hydrolysis, GTPase activity is stimulated by the 30S ribosomal subunit. The sequence is that of Small ribosomal subunit biogenesis GTPase RsgA from Serratia proteamaculans (strain 568).